A 177-amino-acid chain; its full sequence is R-phycoerythrin beta chain (177 aa).

Residues asparagine 35 and aspartate 39 each contribute to the (2R,3E)-phycoerythrobilin site. Phycourobilin is bound by residues cysteine 50, aspartate 54, and cysteine 61. (2R,3E)-phycoerythrobilin-binding positions include asparagine 72, 77 to 78 (RR), cysteine 82, and 84 to 85 (RD). Asparagine 72 bears the N4-methylasparagine mark. 147–148 (SQ) contributes to the phycourobilin binding site. (2R,3E)-phycoerythrobilin is bound by residues isoleucine 154 and cysteine 158.

It belongs to the phycobiliprotein family. As to quaternary structure, heterododecamer of 6 alpha and 6 beta chains. The basic functional unit of phycobiliproteins is a ring-shaped hexamer formed from two back-to-back trimers contacting via the alpha chain subunits. The trimers are composed of alpha/beta subunit heterodimers arranged around a three-fold axis of symmetry. The phycoerythrins also contain a gamma subunit which is located in the center of the hexamer. In terms of processing, contains two covalently linked phycoerythrobilin chromophores and one covalently linked phycourobilin chromophore.

The protein localises to the plastid. It localises to the chloroplast thylakoid membrane. Light-harvesting photosynthetic tetrapyrrole chromophore-protein from the phycobiliprotein complex. This chain is R-phycoerythrin beta chain (rpeB), found in Agarophyton chilense (Red seaweed).